The primary structure comprises 221 residues: PKHD-type hydroxylase A9601_13531 (221 aa).

One can recognise a Fe2OG dioxygenase domain in the interval 80-174; that stretch reads LIHGIMFTKS…RIVCVGWIES (95 aa). Fe cation is bound by residues His-98, Asp-100, and His-155. A 2-oxoglutarate-binding site is contributed by Arg-165.

It depends on Fe(2+) as a cofactor. L-ascorbate serves as cofactor.

The sequence is that of PKHD-type hydroxylase A9601_13531 from Prochlorococcus marinus (strain AS9601).